The primary structure comprises 56 residues: UPF0434 protein WIGBR2520 (56 aa).

The protein belongs to the UPF0434 family.

In Wigglesworthia glossinidia brevipalpis, this protein is UPF0434 protein WIGBR2520.